An 802-amino-acid chain; its full sequence is Xylanase/beta-glucanase (802 aa).

A signal peptide spans 1–31 (MKKSIFKRYAAAVGLMASVLMFTAVPTTSNA). In terms of domain architecture, GH11 spans 32-239 (ADDQKTGKVG…SNGSANVKSI (208 aa)). The active-site Nucleophile is Glu124. The Proton donor role is filled by Glu226. The tract at residues 245–523 (IDIPDPEPIK…SYLEGHDPSK (279 aa)) is b. Residues 258 to 404 (NGYYLKENFE…YMDGAYAGVK (147 aa)) form the CBM-cenC domain. Disordered stretches follow at residues 414 to 436 (SQSVDPPVTEPTNPTNPTGPSVT) and 533 to 564 (TTTTTTTTTTTSKTTTTTTTTSPAMHGGYRDL). Low complexity-rich tracts occupy residues 419–436 (PPVTEPTNPTNPTGPSVT) and 533–553 (TTTTTTTTTTTSKTTTTTTTT). The Dockerin domain maps to 434-513 (SVTKWGDANC…LIRAISELPE (80 aa)). A linker region spans residues 524-555 (TTTTTTRITTTTTTTTTTTTSKTTTTTTTTSP). The 237-residue stretch at 556-792 (AMHGGYRDLG…WVTYNKNGVQ (237 aa)) folds into the GH16 domain. Glu684 serves as the catalytic Nucleophile.

In the N-terminal section; belongs to the glycosyl hydrolase 11 (cellulase G) family. This sequence in the C-terminal section; belongs to the glycosyl hydrolase 16 family.

It catalyses the reaction Endohydrolysis of (1-&gt;4)-beta-D-xylosidic linkages in xylans.. The catalysed reaction is Hydrolysis of (1-&gt;4)-beta-D-glucosidic linkages in beta-D-glucans containing (1-&gt;3)- and (1-&gt;4)-bonds.. Its pathway is glycan degradation; xylan degradation. Contains two catalytic domains with xylanase and endo-beta-1,3-1,4 glucanase activities. The polypeptide is Xylanase/beta-glucanase (xynD) (Ruminococcus flavefaciens).